A 393-amino-acid chain; its full sequence is Bone morphogenetic protein 2 (393 aa).

An N-terminal signal peptide occupies residues 1–19 (MVAGTRCLLVLLLPQVLLG). The propeptide at 20–279 (GAAGLIPELG…GHPLHKREKR (260 aa)) is cleaved by PCSK5. Ser-85 bears the Phosphoserine mark. 3 N-linked (GlcNAc...) asparagine glycosylation sites follow: Asn-133, Asn-161, and Asn-197. The disordered stretch occupies residues 268–290 (GKGHPLHKREKRQAKHKQRKRLK). The span at 271–290 (HPLHKREKRQAKHKQRKRLK) shows a compositional bias: basic residues. Intrachain disulfides connect Cys-293/Cys-358, Cys-322/Cys-390, and Cys-326/Cys-392. N-linked (GlcNAc...) asparagine glycosylation occurs at Asn-335.

This sequence belongs to the TGF-beta family. In terms of assembly, homodimer; disulfide-linked. Interacts with SOSTDC1. Interacts with GREM2, RGMA, RGMB and RGMC. Interacts with ASPN. Interacts with MAFP5. Interacts with FBN1 (via N-terminal domain) and FBN2. Interacts with type I receptor BMPR1A. Interacts with type II receptor BMPR2. Interacts with SCUBE3. Interacts with TNFAIP6 (primarily via Link domain); this interaction is inhibited by hyaluronan. Interacts with ERFE. Interacts with BMPR1A/ALK3; the interaction may induce HAMP expression. Forms heterodimers with BMP6 in vitro; the heterodimer then binds to its receptor BMPR1A /ALK3 and may induce HAMP expression. Interacts with TGFBR3. As to expression, expressed in femur, calvaria, trachea, lung and ovary.

It is found in the secreted. Functionally, growth factor of the TGF-beta superfamily that plays essential roles in many developmental processes, including cardiogenesis, neurogenesis, and osteogenesis. Induces cartilage and bone formation. Initiates the canonical BMP signaling cascade by associating with type I receptor BMPR1A and type II receptor BMPR2. Once all three components are bound together in a complex at the cell surface, BMPR2 phosphorylates and activates BMPR1A. In turn, BMPR1A propagates signal by phosphorylating SMAD1/5/8 that travel to the nucleus and act as activators and repressors of transcription of target genes. Also acts to promote expression of HAMP, via the interaction with its receptor BMPR1A/ALK3. Can also signal through non-canonical pathways such as ERK/MAP kinase signaling cascade that regulates osteoblast differentiation. Also stimulates the differentiation of myoblasts into osteoblasts via the EIF2AK3-EIF2A-ATF4 pathway by stimulating EIF2A phosphorylation which leads to increased expression of ATF4 which plays a central role in osteoblast differentiation. Acts as a positive regulator of odontoblast differentiation during mesenchymal tooth germ formation, expression is repressed during the bell stage by MSX1-mediated inhibition of CTNNB1 signaling. The sequence is that of Bone morphogenetic protein 2 (Bmp2) from Rattus norvegicus (Rat).